A 483-amino-acid chain; its full sequence is Regulatory protein ViaA (483 aa).

Belongs to the ViaA family. As to quaternary structure, homodimer. Interacts with RavA.

The protein resides in the cytoplasm. Its function is as follows. Component of the RavA-ViaA chaperone complex, which may act on the membrane to optimize the function of some of the respiratory chains. ViaA stimulates the ATPase activity of RavA. The polypeptide is Regulatory protein ViaA (Escherichia coli (strain 55989 / EAEC)).